The following is a 1052-amino-acid chain: Membrane-bound transcription factor site-1 protease (1052 aa).

An N-terminal signal peptide occupies residues 1–17 (MKLVNIWLLLLVVLLCG). The propeptide occupies 18-186 (KKHLGDRLGK…TGRHSSRRLL (169 aa)). The N-linked (GlcNAc...) asparagine glycan is linked to asparagine 148. Position 168 is a phosphoserine (serine 168). Over 187-999 (RAIPRQVAQT…MPGRYNQEVG (813 aa)) the chain is Lumenal. Residues 190–472 (PRQVAQTLQA…HGKLDLLRAY (283 aa)) enclose the Peptidase S8 domain. Aspartate 218 acts as the Charge relay system in catalysis. Asparagine 236 carries N-linked (GlcNAc...) asparagine glycosylation. Histidine 249 functions as the Charge relay system in the catalytic mechanism. N-linked (GlcNAc...) asparagine glycosylation occurs at asparagine 305. Serine 414 acts as the Charge relay system in catalysis. N-linked (GlcNAc...) asparagine glycans are attached at residues asparagine 515 and asparagine 728. The span at 877 to 887 (PSLSHSGNRQR) shows a compositional bias: polar residues. Residues 877 to 900 (PSLSHSGNRQRPPSGAGLAPPERM) form a disordered region. The N-linked (GlcNAc...) asparagine glycan is linked to asparagine 939. Residues 1000–1022 (QTIPVFAFLGAMVALAFFVVQIS) form a helical membrane-spanning segment. At 1023–1052 (KAKSRPKRRRPRAKRPQLAQQAHPARTPSV) the chain is on the cytoplasmic side. A compositionally biased stretch (basic residues) spans 1026-1037 (SRPKRRRPRAKR). The segment at 1026 to 1052 (SRPKRRRPRAKRPQLAQQAHPARTPSV) is disordered.

The protein belongs to the peptidase S8 family. As to quaternary structure, interacts with LYSET; this interaction bridges GNPTAB to MBTPS1. Ca(2+) serves as cofactor. Post-translationally, the 148 kDa zymogen is processed progressively into two membrane-bound 120 and 106 kDa forms in the endoplasmic reticulum, and late into a secreted 98 kDa form. The propeptide is autocatalytically removed through an intramolecular cleavage after Leu-186. Further cleavage generates 14, 10, and 8 kDa intermediates. As to expression, widely expressed. In adult rat, highly expressed in anterior pituitary, thyroid and adrenal glands and in liver. In 2-day old rat, detected in developing skin, striated muscles, cardiac muscles, bones, teeth and internal organs. Highly expressed in retina, cerebellum, pituitary, submaxillary, thyroid and adrenal glands, molars, thymus, kidney and intestine.

Its subcellular location is the endoplasmic reticulum membrane. The protein localises to the golgi apparatus membrane. The catalysed reaction is Processes precursors containing basic and hydrophobic/aliphatic residues at P4 and P2, respectively, with a relatively relaxed acceptance of amino acids at P1 and P3.. Inhibited by divalent copper and zinc ions, but not by nickel or cobalt. Inhibited by its prosegment, but not smaller fragments. Inhibited by 4-(2-aminoethyl)benzenesulfonyl fluoride (AEBSF), a serine protease inhibitor. Its function is as follows. Serine protease that cleaves after hydrophobic or small residues, provided that Arg or Lys is in position P4: known substrates include SREBF1/SREBP1, SREBF2/SREBP2, BDNF, GNPTAB, ATF6, ATF6B and FAM20C. Cleaves substrates after Arg-Ser-Val-Leu (SREBP2), Arg-His-Leu-Leu (ATF6), Arg-Gly-Leu-Thr (BDNF) and its own propeptide after Arg-Arg-Leu-Leu. Catalyzes the first step in the proteolytic activation of the sterol regulatory element-binding proteins (SREBPs) SREBF1/SREBP1 and SREBF2/SREBP2. Also mediates the first step in the proteolytic activation of the cyclic AMP-dependent transcription factor ATF-6 (ATF6 and ATF6B). Mediates the protein cleavage of GNPTAB into subunit alpha and beta, thereby participating in biogenesis of lysosomes. Cleaves the propeptide from FAM20C which is required for FAM20C secretion from the Golgi apparatus membrane and for enhancement of FAM20C kinase activity, promoting osteoblast differentiation and biomineralization. Involved in the regulation of M6P-dependent Golgi-to-lysosome trafficking of lysosomal enzymes. It is required for the activation of CREB3L2/BBF2H7, a transcriptional activator of MIA3/TANGO and other genes controlling mega vesicle formation. Therefore, it plays a key role in the regulation of mega vesicle-mediated collagen trafficking. In astrocytes and osteoblasts, upon DNA damage and ER stress, mediates the first step of the regulated intramembrane proteolytic activation of the transcription factor CREB3L1, leading to the inhibition of cell-cycle progression. The polypeptide is Membrane-bound transcription factor site-1 protease (Mbtps1) (Rattus norvegicus (Rat)).